A 162-amino-acid polypeptide reads, in one-letter code: Probable tRNA (guanine(10)-N2)-dimethyltransferase (162 aa).

It belongs to the methyltransferase superfamily. Trm-G10 family. Monomer.

The protein resides in the cytoplasm. The enzyme catalyses guanosine(10) in tRNA + 2 S-adenosyl-L-methionine = N(2)-dimethylguanosine(10) in tRNA + 2 S-adenosyl-L-homocysteine + 2 H(+). Functionally, catalyzes the adenosylmethionine-dependent methylation of the exocyclic amino group (N(2)) of guanosine at position 10 of various tRNAs. Acts via a two-step process that leads to the formation of either N(2)-monomethyl (m(2)G) or N(2)-dimethylguanosine (m(2)(2)G). This is Probable tRNA (guanine(10)-N2)-dimethyltransferase (trmG10) from Methanothermococcus thermolithotrophicus (Methanococcus thermolithotrophicus).